A 66-amino-acid polypeptide reads, in one-letter code: Large ribosomal subunit protein uL29 (66 aa).

Belongs to the universal ribosomal protein uL29 family.

The sequence is that of Large ribosomal subunit protein uL29 from Thermotoga neapolitana (strain ATCC 49049 / DSM 4359 / NBRC 107923 / NS-E).